The following is a 383-amino-acid chain: 8-amino-7-oxononanoate synthase (383 aa).

Substrate is bound at residue R22. 109 to 110 is a binding site for pyridoxal 5'-phosphate; the sequence is GF. H134 lines the substrate pocket. Residues S178, H206, and T232 each contribute to the pyridoxal 5'-phosphate site. The residue at position 235 (K235) is an N6-(pyridoxal phosphate)lysine. Residue T348 coordinates substrate.

The protein belongs to the class-II pyridoxal-phosphate-dependent aminotransferase family. BioF subfamily. Homodimer. The cofactor is pyridoxal 5'-phosphate.

The catalysed reaction is 6-carboxyhexanoyl-[ACP] + L-alanine + H(+) = (8S)-8-amino-7-oxononanoate + holo-[ACP] + CO2. It functions in the pathway cofactor biosynthesis; biotin biosynthesis. Its function is as follows. Catalyzes the decarboxylative condensation of pimeloyl-[acyl-carrier protein] and L-alanine to produce 8-amino-7-oxononanoate (AON), [acyl-carrier protein], and carbon dioxide. This chain is 8-amino-7-oxononanoate synthase, found in Vibrio campbellii (strain ATCC BAA-1116).